Consider the following 150-residue polypeptide: 3-hydroxyacyl-[acyl-carrier-protein] dehydratase FabZ (150 aa).

Residue His-54 is part of the active site.

This sequence belongs to the thioester dehydratase family. FabZ subfamily.

Its subcellular location is the cytoplasm. It catalyses the reaction a (3R)-hydroxyacyl-[ACP] = a (2E)-enoyl-[ACP] + H2O. Its function is as follows. Involved in unsaturated fatty acids biosynthesis. Catalyzes the dehydration of short chain beta-hydroxyacyl-ACPs and long chain saturated and unsaturated beta-hydroxyacyl-ACPs. This is 3-hydroxyacyl-[acyl-carrier-protein] dehydratase FabZ from Chromobacterium violaceum (strain ATCC 12472 / DSM 30191 / JCM 1249 / CCUG 213 / NBRC 12614 / NCIMB 9131 / NCTC 9757 / MK).